A 142-amino-acid polypeptide reads, in one-letter code: Small ribosomal subunit protein uS12 (142 aa).

The protein belongs to the universal ribosomal protein uS12 family. Part of the 30S ribosomal subunit.

Functionally, with S4 and S5 plays an important role in translational accuracy. Located at the interface of the 30S and 50S subunits. This chain is Small ribosomal subunit protein uS12, found in Methanospirillum hungatei JF-1 (strain ATCC 27890 / DSM 864 / NBRC 100397 / JF-1).